Reading from the N-terminus, the 296-residue chain is Sulfotransferase 6B1 (296 aa).

The active-site Proton acceptor is the His-112. 3'-phosphoadenylyl sulfate is bound by residues Arg-134, Ser-142, Tyr-197, and Arg-253–Gly-255.

Belongs to the sulfotransferase 1 family.

It is found in the cytoplasm. Its subcellular location is the cytosol. The enzyme catalyses thyroxine + 3'-phosphoadenylyl sulfate = thyroxine sulfate + adenosine 3',5'-bisphosphate + H(+). Strongly inhibited by the divalent metal cations Fe(2+), Hg(2+), Co(2+), Zn(2+), Cu(2+) and Cd(2+). Functionally, sulfotransferase that utilizes 3'-phospho-5'-adenylyl sulfate (PAPS) as sulfonate donor to catalyze the sulfate conjugation of a variety of xenobiotic and endogenous compounds, including dopamine, T3 (triiodo-L-thyronine), T4 (thyroxine), flavonoids, isoflavonoids, and other phenolic compounds. The chain is Sulfotransferase 6B1 from Danio rerio (Zebrafish).